We begin with the raw amino-acid sequence, 266 residues long: NADP-dependent mannitol dehydrogenase (266 aa).

NADP(+) contacts are provided by Ser53, Asn107, and Lys140. Ser159 serves as the catalytic Proton donor. Positions 174, 178, 206, and 208 each coordinate NADP(+). Residue Tyr174 is the Proton acceptor of the active site. The Lowers pKa of active site Tyr role is filled by Lys178.

Belongs to the short-chain dehydrogenases/reductases (SDR) family. Homotetramer.

The enzyme catalyses D-mannitol + NADP(+) = D-fructose + NADPH + H(+). Functionally, D-mannitol 2-dehydrogenase which is not necessary for D-mannitol catabolism. D-mannitol metabolism occurs via at least two different routes involving mannitol dehydrogenase (MDH) or mannitol 1-phosphate dehydrogenase, and the exact physiological role of mannitol dehydrogenases remains unclear. In Hypocrea jecorina (strain ATCC 56765 / BCRC 32924 / NRRL 11460 / Rut C-30) (Trichoderma reesei), this protein is NADP-dependent mannitol dehydrogenase.